The primary structure comprises 66 residues: Protein I177L (66 aa).

Residue Asn-11 is glycosylated (N-linked (GlcNAc...) asparagine; by host).

It belongs to the asfivirus I177L family.

It is found in the virion. The polypeptide is Protein I177L (Ornithodoros (relapsing fever ticks)).